The primary structure comprises 436 residues: Adenylyltransferase and sulfurtransferase UBA4 (436 aa).

ATP contacts are provided by residues Gly-74, Asp-95, 102-106 (SNLHR), Lys-119, and 163-164 (DT). 2 residues coordinate Zn(2+): Cys-205 and Cys-208. Catalysis depends on Cys-222, which acts as the Glycyl thioester intermediate; for adenylyltransferase activity. Zn(2+)-binding residues include Cys-283 and Cys-286. Residues 335-434 (NEKDHILIDV…YIDEEDHSYP (100 aa)) form the Rhodanese domain. Cys-393 acts as the Cysteine persulfide intermediate; for sulfurtransferase activity in catalysis.

The protein in the N-terminal section; belongs to the HesA/MoeB/ThiF family. UBA4 subfamily. Requires Zn(2+) as cofactor.

Its subcellular location is the cytoplasm. The protein localises to the cytosol. Its pathway is tRNA modification; 5-methoxycarbonylmethyl-2-thiouridine-tRNA biosynthesis. Functionally, plays a central role in 2-thiolation of mcm(5)S(2)U at tRNA wobble positions of cytosolic tRNA(Lys), tRNA(Glu) and tRNA(Gln). Acts by mediating the C-terminal thiocarboxylation of sulfur carrier URM1. Its N-terminus first activates URM1 as acyl-adenylate (-COAMP), then the persulfide sulfur on the catalytic cysteine is transferred to URM1 to form thiocarboxylation (-COSH) of its C-terminus. The reaction probably involves hydrogen sulfide that is generated from the persulfide intermediate and that acts as a nucleophile towards URM1. Subsequently, a transient disulfide bond is formed. Does not use thiosulfate as sulfur donor; NFS1 probably acting as a sulfur donor for thiocarboxylation reactions. Prior mcm(5) tRNA modification by the elongator complex is required for 2-thiolation. May also be involved in protein urmylation. The polypeptide is Adenylyltransferase and sulfurtransferase UBA4 (Vanderwaltozyma polyspora (strain ATCC 22028 / DSM 70294 / BCRC 21397 / CBS 2163 / NBRC 10782 / NRRL Y-8283 / UCD 57-17) (Kluyveromyces polysporus)).